Reading from the N-terminus, the 300-residue chain is MTKVSVIGSISMDLVTRTNRVPNAGETVFGEDFAMVPGGKGANQAVAFARLSPNEVSMIGAVGKDAFGESILQNFKENAVLFENVGTVPQTTGIAQITLYDDDNRIIIIPGANNEVLPSYLADLWEKIKESQLVILQNEIPHETNLAIAKFCKENAIKVLYNPAPARKTDLEMIDFVDYITPNEHECKELFPNLALEEILKKYSNRLIVTLGSEGVIFHDGETLQKIPAIKAKVVDTTGAGDTFNGAFAFGLTENLSISDSIRLAVVASHLSIQKFGAQGGMPKLSEVKAKLKELEINLY.

Residues 11–13, 39–43, and Glu139 each bind substrate; these read SMD and GKGAN. ATP-binding positions include Asn183 and 210–215; that span reads TLGSEG. K(+)-binding residues include Asp236 and Thr238. 241 to 242 contacts ATP; that stretch reads GD. Asp242 lines the substrate pocket. The active-site Proton acceptor is the Asp242. Positions 272, 275, and 277 each coordinate K(+).

The protein belongs to the carbohydrate kinase PfkB family. Ribokinase subfamily. As to quaternary structure, homodimer. Requires Mg(2+) as cofactor.

Its subcellular location is the cytoplasm. It catalyses the reaction D-ribose + ATP = D-ribose 5-phosphate + ADP + H(+). Its pathway is carbohydrate metabolism; D-ribose degradation; D-ribose 5-phosphate from beta-D-ribopyranose: step 2/2. Its activity is regulated as follows. Activated by a monovalent cation that binds near, but not in, the active site. The most likely occupant of the site in vivo is potassium. Ion binding induces a conformational change that may alter substrate affinity. Functionally, catalyzes the phosphorylation of ribose at O-5 in a reaction requiring ATP and magnesium. The resulting D-ribose-5-phosphate can then be used either for sythesis of nucleotides, histidine, and tryptophan, or as a component of the pentose phosphate pathway. This chain is Ribokinase, found in Lactococcus lactis subsp. lactis (strain IL1403) (Streptococcus lactis).